A 226-amino-acid polypeptide reads, in one-letter code: Large ribosomal subunit protein uL1 (226 aa).

This sequence belongs to the universal ribosomal protein uL1 family. In terms of assembly, part of the 50S ribosomal subunit.

Binds directly to 23S rRNA. The L1 stalk is quite mobile in the ribosome, and is involved in E site tRNA release. In terms of biological role, protein L1 is also a translational repressor protein, it controls the translation of the L11 operon by binding to its mRNA. The protein is Large ribosomal subunit protein uL1 of Treponema denticola (strain ATCC 35405 / DSM 14222 / CIP 103919 / JCM 8153 / KCTC 15104).